Reading from the N-terminus, the 452-residue chain is Ribulose bisphosphate carboxylase large chain (452 aa).

Positions 1-2 are excised as a propeptide; that stretch reads MS. Pro-3 bears the N-acetylproline mark. At Lys-14 the chain carries N6,N6,N6-trimethyllysine. Positions 123 and 173 each coordinate substrate. Lys-175 serves as the catalytic Proton acceptor. Lys-177 is a substrate binding site. Lys-201, Asp-203, and Glu-204 together coordinate Mg(2+). An N6-carboxylysine modification is found at Lys-201. His-294 serves as the catalytic Proton acceptor. Arg-295, Xaa-327, and Ser-379 together coordinate substrate.

Belongs to the RuBisCO large chain family. Type I subfamily. Heterohexadecamer of 8 large chains and 8 small chains; disulfide-linked. The disulfide link is formed within the large subunit homodimers. Mg(2+) serves as cofactor. Post-translationally, the disulfide bond which can form in the large chain dimeric partners within the hexadecamer appears to be associated with oxidative stress and protein turnover.

It is found in the plastid. The protein localises to the chloroplast. The enzyme catalyses 2 (2R)-3-phosphoglycerate + 2 H(+) = D-ribulose 1,5-bisphosphate + CO2 + H2O. The catalysed reaction is D-ribulose 1,5-bisphosphate + O2 = 2-phosphoglycolate + (2R)-3-phosphoglycerate + 2 H(+). RuBisCO catalyzes two reactions: the carboxylation of D-ribulose 1,5-bisphosphate, the primary event in carbon dioxide fixation, as well as the oxidative fragmentation of the pentose substrate in the photorespiration process. Both reactions occur simultaneously and in competition at the same active site. This is Ribulose bisphosphate carboxylase large chain from Salvadora persica (Toothbrush tree).